Here is a 396-residue protein sequence, read N- to C-terminus: Enoyl-[acyl-carrier-protein] reductase [NADH] (396 aa).

NAD(+)-binding positions include 47–52 (GASTGF), 73–74 (FE), 110–111 (DA), and 138–139 (LA). A substrate-binding site is contributed by Tyr-224. Tyr-234 acts as the Proton donor in catalysis. Residues Lys-243 and 272 to 274 (LVT) contribute to the NAD(+) site.

This sequence belongs to the TER reductase family. As to quaternary structure, monomer.

It carries out the reaction a 2,3-saturated acyl-[ACP] + NAD(+) = a (2E)-enoyl-[ACP] + NADH + H(+). It functions in the pathway lipid metabolism; fatty acid biosynthesis. Involved in the final reduction of the elongation cycle of fatty acid synthesis (FAS II). Catalyzes the reduction of a carbon-carbon double bond in an enoyl moiety that is covalently linked to an acyl carrier protein (ACP). This is Enoyl-[acyl-carrier-protein] reductase [NADH] from Flavobacterium psychrophilum (strain ATCC 49511 / DSM 21280 / CIP 103535 / JIP02/86).